A 792-amino-acid polypeptide reads, in one-letter code: Putative cellulose synthase-like protein H3 (792 aa).

The next 2 helical transmembrane spans lie at 25-45 and 55-75; these read AWML…VRRA and VGGA…FVWL. The disordered stretch occupies residues 132 to 154; it reads GRHVRDDGGPGARAAGGDGEQGA. The segment covering 140–151 has biased composition (gly residues); sequence GPGARAAGGDGE. Active-site residues include D181 and D501. A run of 6 helical transmembrane segments spans residues 579–599, 613–632, 650–670, 706–726, 739–759, and 768–788; these read VWAV…YCLL, FNIT…VEYM, IISA…TIGL, VFIP…IGTW, GPGI…LPFV, and YGIP…FLFC.

This sequence belongs to the glycosyltransferase 2 family. Plant cellulose synthase-like H subfamily.

Its subcellular location is the golgi apparatus membrane. Its function is as follows. Thought to be a Golgi-localized beta-glycan synthase that polymerize the backbones of noncellulosic polysaccharides (hemicelluloses) of plant cell wall. The polypeptide is Putative cellulose synthase-like protein H3 (CSLH3) (Oryza sativa subsp. japonica (Rice)).